The chain runs to 726 residues: Probable dipeptidyl-peptidase 5 (726 aa).

Positions 1–19 (MAAAKWLIASLAFASSGLA) are cleaved as a signal peptide. N-linked (GlcNAc...) asparagine glycosylation is found at N96 and N252. Residues 269 to 291 (AEPINKRNGPRTPQGIEGASSSP) form a disordered region. Residue N485 is glycosylated (N-linked (GlcNAc...) asparagine). The active-site Charge relay system is S558. N-linked (GlcNAc...) asparagine glycosylation occurs at N605. Active-site charge relay system residues include D641 and H673. The N-linked (GlcNAc...) asparagine glycan is linked to N699.

The protein belongs to the peptidase S9C family.

It is found in the secreted. In terms of biological role, extracellular dipeptidyl-peptidase which removes N-terminal dipeptides sequentially from polypeptides having unsubstituted N-termini. Contributes to pathogenicity. The sequence is that of Probable dipeptidyl-peptidase 5 (DPP5) from Arthroderma benhamiae (strain ATCC MYA-4681 / CBS 112371) (Trichophyton mentagrophytes).